Consider the following 151-residue polypeptide: UPF0178 protein PSHAb0045 (151 aa).

Belongs to the UPF0178 family.

This is UPF0178 protein PSHAb0045 from Pseudoalteromonas translucida (strain TAC 125).